The following is an 84-amino-acid chain: Large ribosomal subunit protein bL27 (84 aa).

The segment at 1–21 (MAHKKGGGSSKNGRDSQSKRL) is disordered.

The protein belongs to the bacterial ribosomal protein bL27 family.

This chain is Large ribosomal subunit protein bL27, found in Brachyspira hyodysenteriae (strain ATCC 49526 / WA1).